The chain runs to 158 residues: Transcription elongation factor GreA (158 aa).

This sequence belongs to the GreA/GreB family.

Necessary for efficient RNA polymerase transcription elongation past template-encoded arresting sites. The arresting sites in DNA have the property of trapping a certain fraction of elongating RNA polymerases that pass through, resulting in locked ternary complexes. Cleavage of the nascent transcript by cleavage factors such as GreA or GreB allows the resumption of elongation from the new 3'terminus. GreA releases sequences of 2 to 3 nucleotides. The chain is Transcription elongation factor GreA from Methylobacterium nodulans (strain LMG 21967 / CNCM I-2342 / ORS 2060).